The chain runs to 332 residues: MAKEPMRVLVTGAAGQIGYALVPMIARGVMLGADQPVILHMLDIPPAAEALNGVKMELVDAAFPLLKGVVATTDVVEACTGVNVAVMVGGFPRKEGMERKDVMSKNVSIYKSQASALEAHAAPNCKVLVVANPANTNALILKEFAPSIPEKNVTCLTRLDHNRALGQISERLNVQVSDVKNVIIWGNHSSSQYPDVNHATVKTSTGEKPVRELVSDDEWLNGEFITTVQQRGAAIIKARKFSSALSAASSACDHIRDWVLGTPEGTFVSMGVYSDGSYGVPSGLIYSFPVTCSGGEWKIVQGLPIDEFSRKKMDATAQELTEEKTLAYSCLE.

NAD(+) contacts are provided by residues 16 to 17 (QI), aspartate 43, and glycine 90. An oxaloacetate-binding site is contributed by arginine 99. Glutamine 113 and asparagine 132 together coordinate NAD(+). Residues asparagine 132, arginine 163, histidine 188, and serine 243 each coordinate oxaloacetate. Histidine 188 functions as the Proton acceptor in the catalytic mechanism.

The protein belongs to the LDH/MDH superfamily. MDH type 2 family. In terms of assembly, monomer. In terms of tissue distribution, expressed constitutively in roots.

Its subcellular location is the cell membrane. The catalysed reaction is (S)-malate + NAD(+) = oxaloacetate + NADH + H(+). Its function is as follows. Malate dehydrogenase; catalyzes a reversible NAD-dependent dehydrogenase reaction involved in central metabolism and redox homeostasis. The polypeptide is Malate dehydrogenase, cytoplasmic (Zea mays (Maize)).